The following is a 2084-amino-acid chain: RNA-directed RNA polymerase L (2084 aa).

The tract at residues 20–221 (EPGLYDQIYD…IELQKSEEEL (202 aa)) is endonuclease. Histidine 80, aspartate 112, and glutamate 126 together coordinate Mn(2+). Residue lysine 145 is the For endonuclease activity of the active site. The 204-residue stretch at 969 to 1172 (SARSLGPGSI…FGIYSSEKST (204 aa)) folds into the RdRp catalytic domain. Aspartate 1127 provides a ligand contact to Mg(2+). The segment at 1695 to 1810 (AQSGTLGGFS…TDGCPVRIME (116 aa)) is cap-binding.

Belongs to the Bunyavirales RNA polymerase family. In terms of assembly, homomultimer. Interacts with the glycoprotein N; this interaction allows efficient polymerase packaging into virus particles. Interacts with nucleoprotein N. Requires Mn(2+) as cofactor. Mg(2+) is required as a cofactor.

The protein resides in the host Golgi apparatus. It is found in the host endoplasmic reticulum. Its subcellular location is the host endoplasmic reticulum-Golgi intermediate compartment. The protein localises to the virion. It carries out the reaction RNA(n) + a ribonucleoside 5'-triphosphate = RNA(n+1) + diphosphate. Its activity is regulated as follows. Inhibited by Baloxavir acid (BXA). Functionally, RNA-dependent RNA polymerase, which is responsible for the replication and transcription of the viral RNA genome using antigenomic RNA as an intermediate. During transcription, synthesizes subgenomic RNAs and assures their capping by a cap-snatching mechanism, which involves the endonuclease activity cleaving the host capped pre-mRNAs. These short capped RNAs are then used as primers for viral transcription. The 3'-end of subgenomic mRNAs molecules are not polyadenylated. During replication, the polymerase binds the 5' and 3' vRNA extremities at distinct sites. In turn, significant conformational changes occur in the polymerase and in vRNA to initiate active RNA synthesis. As a consequence of the use of the same enzyme for both transcription and replication, these mechanisms need to be well coordinated. The sequence is that of RNA-directed RNA polymerase L from Dabie bandavirus (Severe fever with thrombocytopenia virus).